The chain runs to 165 residues: uncharacterized protein (165 aa).

The helical transmembrane segment at 10–27 (VSLTIVFVLFFSADVSLT) threads the bilayer.

The protein resides in the membrane. This is an uncharacterized protein from Saccharomyces cerevisiae (strain ATCC 204508 / S288c) (Baker's yeast).